The following is a 636-amino-acid chain: Poly(3-hydroxyalkanoate) polymerase subunit PhaC (636 aa).

Disordered stretches follow at residues 1–38 (MYNK…DATD) and 129–152 (QGTR…KRFS). Basic and acidic residues predominate over residues 143–152 (PDTRKDKRFS). The active site involves Cys-373.

It belongs to the PHA/PHB synthase family. Type I PhaC subfamily.

The protein localises to the cytoplasm. It carries out the reaction (3R)-3-hydroxybutanoyl-CoA + [(3R)-hydroxybutanoate](n) = [(3R)-hydroxybutanoate](n+1) + CoA. Its pathway is biopolymer metabolism; poly-(R)-3-hydroxybutanoate biosynthesis. Its function is as follows. Polymerizes D(-)-3-hydroxybutyryl-CoA to create PHB which consists of thousands of hydroxybutyrate molecules linked end to end. PHB serves as an intracellular energy reserve material when cells grow under conditions of nutrient limitation. This chain is Poly(3-hydroxyalkanoate) polymerase subunit PhaC, found in Rhizobium etli (strain ATCC 51251 / DSM 11541 / JCM 21823 / NBRC 15573 / CFN 42).